A 549-amino-acid chain; its full sequence is uncharacterized protein (549 aa).

A run of 12 helical transmembrane segments spans residues 1–21, 28–48, 50–70, 85–105, 106–126, 165–185, 187–207, 222–242, 278–298, 310–330, 361–381, and 398–418; these read MEIFFTILIMTLVVSLSGVVT, IPLPLMQIAIGALLAWPTFGL, VEFDPELFLVLFIPPLLFADG, IFGLALALVVVTVVGIGFLIY, WVVPGIPLIPAFALAAVLSPT, FAVAVAMGTMIFTVGGATVEF, KVAIGGILAGFVVSWLYGRSL, IVLLFLLPFASYLIAEHIGVS, LEFVFNGMVFLLLGLQLPGIL, NVEIWMLFTNIILIYAALMLV, ILIASFAGVRGAITLAGVLSI, and VFLAAGVILFSLFVGVVMLPI.

It belongs to the monovalent cation:proton antiporter 1 (CPA1) transporter (TC 2.A.36) family.

It localises to the cell inner membrane. This is an uncharacterized protein from Escherichia coli (strain K12).